Here is a 222-residue protein sequence, read N- to C-terminus: Cytochrome b6-f complex iron-sulfur subunit, chloroplastic (222 aa).

The transit peptide at Met-1–Ser-49 directs the protein to the chloroplast. A helical membrane pass occupies residues Leu-66 to Val-86. The 97-residue stretch at Val-109 to Phe-205 folds into the Rieske domain. [2Fe-2S] cluster-binding residues include Cys-151, His-153, Cys-169, and His-172. Cysteines 156 and 171 form a disulfide.

Belongs to the Rieske iron-sulfur protein family. In terms of assembly, the 4 large subunits of the cytochrome b6-f complex are cytochrome b6, subunit IV (17 kDa polypeptide, petD), cytochrome f and the Rieske protein, while the 4 small subunits are petG, petL, petM and petN. The complex functions as a dimer. [2Fe-2S] cluster serves as cofactor.

Its subcellular location is the plastid. The protein resides in the chloroplast thylakoid membrane. The catalysed reaction is 2 oxidized [plastocyanin] + a plastoquinol + 2 H(+)(in) = 2 reduced [plastocyanin] + a plastoquinone + 4 H(+)(out). In terms of biological role, component of the cytochrome b6-f complex, which mediates electron transfer between photosystem II (PSII) and photosystem I (PSI), cyclic electron flow around PSI, and state transitions. This chain is Cytochrome b6-f complex iron-sulfur subunit, chloroplastic (petC), found in Triticum aestivum (Wheat).